The primary structure comprises 140 residues: Hemoglobin subunit alpha (140 aa).

Residues 1-140 (LSAADKGHVK…VSTVLTSKYR (140 aa)) form the Globin domain. Ser-2 is modified (phosphoserine). Lys-6 and Lys-10 each carry N6-succinyllysine. Lys-15 carries the post-translational modification N6-acetyllysine; alternate. Lys-15 is modified (N6-succinyllysine; alternate). Tyr-23 carries the phosphotyrosine modification. The residue at position 34 (Ser-34) is a Phosphoserine. An N6-succinyllysine modification is found at Lys-39. Ser-48 is subject to Phosphoserine. His-57 lines the O2 pocket. His-86 is a heme b binding site. Residue Ser-101 is modified to Phosphoserine. Phosphothreonine is present on Thr-107. Ser-123 carries the phosphoserine modification. 2 positions are modified to phosphothreonine: Thr-133 and Thr-136. Ser-137 carries the post-translational modification Phosphoserine.

This sequence belongs to the globin family. In terms of assembly, heterotetramer of two alpha chains and two beta chains. As to expression, red blood cells.

Its function is as follows. Involved in oxygen transport from the lung to the various peripheral tissues. Hemopressin acts as an antagonist peptide of the cannabinoid receptor CNR1. Hemopressin-binding efficiently blocks cannabinoid receptor CNR1 and subsequent signaling. In Tragelaphus strepsiceros (Greater kudu), this protein is Hemoglobin subunit alpha (HBA).